The chain runs to 276 residues: 3-methyl-2-oxobutanoate hydroxymethyltransferase (276 aa).

Mg(2+) contacts are provided by aspartate 50 and aspartate 89. 3-methyl-2-oxobutanoate contacts are provided by residues 50–51 (DS), aspartate 89, and lysine 119. A Mg(2+)-binding site is contributed by glutamate 121. Glutamate 188 acts as the Proton acceptor in catalysis.

The protein belongs to the PanB family. In terms of assembly, homodecamer; pentamer of dimers. Mg(2+) serves as cofactor.

The protein localises to the cytoplasm. It catalyses the reaction 3-methyl-2-oxobutanoate + (6R)-5,10-methylene-5,6,7,8-tetrahydrofolate + H2O = 2-dehydropantoate + (6S)-5,6,7,8-tetrahydrofolate. The protein operates within cofactor biosynthesis; (R)-pantothenate biosynthesis; (R)-pantoate from 3-methyl-2-oxobutanoate: step 1/2. Catalyzes the reversible reaction in which hydroxymethyl group from 5,10-methylenetetrahydrofolate is transferred onto alpha-ketoisovalerate to form ketopantoate. This chain is 3-methyl-2-oxobutanoate hydroxymethyltransferase, found in Paracoccus denitrificans (strain Pd 1222).